Consider the following 141-residue polypeptide: Large ribosomal subunit protein uL11 (141 aa).

The protein belongs to the universal ribosomal protein uL11 family. As to quaternary structure, part of the ribosomal stalk of the 50S ribosomal subunit. Interacts with L10 and the large rRNA to form the base of the stalk. L10 forms an elongated spine to which L12 dimers bind in a sequential fashion forming a multimeric L10(L12)X complex. Post-translationally, one or more lysine residues are methylated.

In terms of biological role, forms part of the ribosomal stalk which helps the ribosome interact with GTP-bound translation factors. This chain is Large ribosomal subunit protein uL11, found in Chlorobium phaeobacteroides (strain BS1).